Consider the following 359-residue polypeptide: Peroxisome assembly protein 12 (359 aa).

The Peroxisomal matrix segment spans residues 1–19 (MAEHGAHFTAASVADDQPS). The chain crosses the membrane as a helical span at residues 20–47 (IFEVVAQDSLMTAVRPALQHVVKVLAES). The Cytoplasmic segment spans residues 48–51 (NPTH). A helical transmembrane segment spans residues 52-76 (YGFLWRWFDEIFTLLDLLLQQHYLS). Residues 77 to 109 (RTSASFSENFYGLKRIVMGDTHKSQRLASAGLP) are Peroxisomal matrix-facing. A helical membrane pass occupies residues 110-139 (KQQLWKSIMFLVLLPYLKVKLEKLVSSLRE). Over 140 to 144 (EDEYS) the chain is Cytoplasmic. The helical transmembrane segment at 145-183 (IHPPSSRWKRFYRAFLAAYPFVNMAWEGWFLVQQLRYIL) threads the bilayer. Over 184–249 (GKAQHHSPLL…VGGVALSLST (66 aa)) the chain is Peroxisomal matrix. A helical transmembrane segment spans residues 250 to 277 (GLSVGVFFLQFLDWWYSSENQETIKSLT). Over 278–359 (ALPTPPPPVH…HLIKLYSPEN (82 aa)) the chain is Cytoplasmic. Residues Cys-304, Cys-307, Cys-325, and Cys-328 each coordinate Zn(2+). The RING-type; degenerate zinc-finger motif lies at 304–343 (CPLCRKTRVNDTVLATSGYVFCYRCVFHYVRSHQACPITG).

Belongs to the pex2/pex10/pex12 family. Component of the PEX2-PEX10-PEX12 retrotranslocation channel, composed of PEX2, PEX10 and PEX12. Interacts with PEX19 via its cytoplasmic domain.

It is found in the peroxisome membrane. It participates in protein modification; protein ubiquitination. Functionally, component of a retrotranslocation channel required for peroxisome organization by mediating export of the PEX5 receptor from peroxisomes to the cytosol, thereby promoting PEX5 recycling. The retrotranslocation channel is composed of PEX2, PEX10 and PEX12; each subunit contributing transmembrane segments that coassemble into an open channel that specifically allows the passage of PEX5 through the peroxisomal membrane. PEX12 also regulates PEX5 recycling by activating the E3 ubiquitin-protein ligase activity of PEX10. When PEX5 recycling is compromised, PEX12 stimulates PEX10-mediated polyubiquitination of PEX5, leading to its subsequent degradation. The polypeptide is Peroxisome assembly protein 12 (Homo sapiens (Human)).